Reading from the N-terminus, the 25-residue chain is M-poneritoxin-Nc2a (25 aa).

This sequence belongs to the ponericin-L family. Expressed by the venom gland.

The protein resides in the secreted. Its subcellular location is the target cell membrane. Membrane-perturbating peptide with multiple activities. It is insecticidal, since it induces reversible paralysis in insects (L.cuprina) after 1 hour, but fails to kill them. It shows moderate antibacterial activity against some Gram-positive and Gram-negative bacteria. It is also antiparasitic, since it moderately inhibits the larval development of the major pathogenic nematode of ruminants (H.contortus, IC(50)=23.2 uM), but fails to reduce the motility of adult males of the other nematode B.malayi. It also shows moderate cytotoxic activity against HEK293 cells (EC(50)=48-57 uM) but does not induce hemolysis in human erythrocytes. It also causes a moderate increase in intracellular calcium concentration on neuronal and epithelial cell lines, which supports a non-specific membrane perturbation mechanism of action. The protein is M-poneritoxin-Nc2a of Neoponera commutata (Large hunting ant).